The following is a 258-amino-acid chain: Thiazole synthase (258 aa).

Lysine 97 (schiff-base intermediate with DXP) is an active-site residue. 1-deoxy-D-xylulose 5-phosphate is bound by residues glycine 158, 184 to 185, and 206 to 207; these read AG and NT.

The protein belongs to the ThiG family. Homotetramer. Forms heterodimers with either ThiH or ThiS.

The protein resides in the cytoplasm. It catalyses the reaction [ThiS sulfur-carrier protein]-C-terminal-Gly-aminoethanethioate + 2-iminoacetate + 1-deoxy-D-xylulose 5-phosphate = [ThiS sulfur-carrier protein]-C-terminal Gly-Gly + 2-[(2R,5Z)-2-carboxy-4-methylthiazol-5(2H)-ylidene]ethyl phosphate + 2 H2O + H(+). It functions in the pathway cofactor biosynthesis; thiamine diphosphate biosynthesis. In terms of biological role, catalyzes the rearrangement of 1-deoxy-D-xylulose 5-phosphate (DXP) to produce the thiazole phosphate moiety of thiamine. Sulfur is provided by the thiocarboxylate moiety of the carrier protein ThiS. In vitro, sulfur can be provided by H(2)S. The protein is Thiazole synthase of Marinomonas sp. (strain MWYL1).